The sequence spans 468 residues: Alpha-N-acetylgalactosaminidase (468 aa).

Positions 1-30 form a signal peptide, tat-type signal; the sequence is MENTRRNFLKKVTAAGIGAAGLAVTDQAMA. NAD(+) contacts are provided by residues 62–63, aspartate 84, 133–136, 154–155, and asparagine 183; these read SR, WEWH, and EV. Substrate is bound at residue tyrosine 212. 243–247 provides a ligand contact to NAD(+); the sequence is AEAQW. Substrate contacts are provided by residues arginine 248, 260–263, and tyrosine 342; that span reads YPTH. An NAD(+)-binding site is contributed by tyrosine 260.

Belongs to the Gfo/Idh/MocA family. Glycosyl hydrolase 109 subfamily. The cofactor is NAD(+). In terms of processing, predicted to be exported by the Tat system. The position of the signal peptide cleavage has not been experimentally proven.

The catalysed reaction is Cleavage of non-reducing alpha-(1-&gt;3)-N-acetylgalactosamine residues from human blood group A and AB mucin glycoproteins, Forssman hapten and blood group A lacto series glycolipids.. In terms of biological role, glycosidase that has specific alpha-N-acetylgalactosaminidase activity. In Tannerella forsythia (Bacteroides forsythus), this protein is Alpha-N-acetylgalactosaminidase (nagA).